Here is a 961-residue protein sequence, read N- to C-terminus: Replication protein 1a (961 aa).

Positions 48–380 are methyltransferase; the sequence is VRNKLSIEEA…VIINGQAIMA (333 aa). Residues 71–260 enclose the Alphavirus-like MT domain; the sequence is NLTQQYHAPH…HGWQDLGSFF (190 aa). The tract at residues 392–409 is membrane association; that stretch reads VAFALTLNLYQKYEKLTA. Positions 503–512 are enriched in basic residues; the sequence is KTKRSKKKAK. Residues 503 to 541 form a disordered region; it reads KTKRSKKKAKVPPAAEIPQEEFHDAPESSSPESVSDDVK. A (+)RNA virus helicase ATP-binding domain is found at 655-810; that stretch reads DKTCACSNLR…NLQYDRRDVV (156 aa). The interval 682-946 is ATP-dependent helicase; sequence MVDGVAGCGK…TRHKKSFEYC (265 aa). 685-692 provides a ligand contact to ATP; sequence GVAGCGKT. A (+)RNA virus helicase C-terminal domain is found at 811–961; sequence HKTYRCPQDV…AGDLIFNCVK (151 aa).

It belongs to the bromoviridae replication protein 1a family. In terms of assembly, interacts with RNA-directed RNA polymerase 2a.

It is found in the host endoplasmic reticulum membrane. Functionally, involved in the virus replication. Contains a helicase domain and a methyltransferase domain. The methyltransferase domain is probably involved in viral RNA capping. Involved in the formation of ER membrane spherular invaginations in which RNA replication complexes form. The chain is Replication protein 1a from Bromus inermis (Smooth brome grass).